Here is a 364-residue protein sequence, read N- to C-terminus: 3-isopropylmalate dehydrogenase (364 aa).

79 to 92 (GPKWNNINETSRPE) is an NAD(+) binding site. Substrate is bound by residues Arg-100, Arg-110, Arg-139, and Asp-228. 3 residues coordinate Mg(2+): Asp-228, Asp-252, and Asp-256. 286–298 (GSAPDIAGKNIAN) provides a ligand contact to NAD(+).

The protein belongs to the isocitrate and isopropylmalate dehydrogenases family. LeuB type 1 subfamily. In terms of assembly, homodimer. It depends on Mg(2+) as a cofactor. Requires Mn(2+) as cofactor.

It localises to the cytoplasm. The catalysed reaction is (2R,3S)-3-isopropylmalate + NAD(+) = 4-methyl-2-oxopentanoate + CO2 + NADH. It participates in amino-acid biosynthesis; L-leucine biosynthesis; L-leucine from 3-methyl-2-oxobutanoate: step 3/4. Functionally, catalyzes the oxidation of 3-carboxy-2-hydroxy-4-methylpentanoate (3-isopropylmalate) to 3-carboxy-4-methyl-2-oxopentanoate. The product decarboxylates to 4-methyl-2 oxopentanoate. This chain is 3-isopropylmalate dehydrogenase, found in Blochmanniella floridana.